A 334-amino-acid chain; its full sequence is Ventral anterior homeobox 1 (334 aa).

Over residues 1–34 (MFGKPDKMDVRCHSDAEAARVSKNAHKESRESKG) the composition is skewed to basic and acidic residues. Residues 1–41 (MFGKPDKMDVRCHSDAEAARVSKNAHKESRESKGAEGNLPA) are disordered. A DNA-binding region (homeobox) is located at residues 100 to 159 (PKRTRTSFTAEQLYRLEMEFQRCQYVVGRERTELARQLNLSETQVKVWFQNRRTKQKKDQ). Disordered regions lie at residues 234-263 (PGPAGAASPHPPAVGGAPGPGPAGPGGLHA) and 314-334 (SAFEPYSRTNNKEGAEKKALD). Positions 323–334 (NNKEGAEKKALD) are enriched in basic and acidic residues.

Belongs to the EMX homeobox family.

It localises to the nucleus. Transcription factor that may function in dorsoventral specification of the forebrain. Required for axon guidance and major tract formation in the developing forebrain. May contribute to the differentiation of the neuroretina, pigmented epithelium and optic stalk. This Homo sapiens (Human) protein is Ventral anterior homeobox 1 (VAX1).